The chain runs to 558 residues: Arginine--tRNA ligase (558 aa).

The 'HIGH' region signature appears at 116–126 (ANPNGPLHVGH).

The protein belongs to the class-I aminoacyl-tRNA synthetase family.

Its subcellular location is the cytoplasm. It carries out the reaction tRNA(Arg) + L-arginine + ATP = L-arginyl-tRNA(Arg) + AMP + diphosphate. This chain is Arginine--tRNA ligase, found in Methanocorpusculum labreanum (strain ATCC 43576 / DSM 4855 / Z).